Consider the following 208-residue polypeptide: Uracil phosphoribosyltransferase (208 aa).

5-phospho-alpha-D-ribose 1-diphosphate-binding positions include R78, R103, and 130-138 (DPMLATGGS). Residues I193 and 198 to 200 (GDA) contribute to the uracil site. D199 lines the 5-phospho-alpha-D-ribose 1-diphosphate pocket.

Belongs to the UPRTase family. It depends on Mg(2+) as a cofactor.

It catalyses the reaction UMP + diphosphate = 5-phospho-alpha-D-ribose 1-diphosphate + uracil. It participates in pyrimidine metabolism; UMP biosynthesis via salvage pathway; UMP from uracil: step 1/1. Allosterically activated by GTP. In terms of biological role, catalyzes the conversion of uracil and 5-phospho-alpha-D-ribose 1-diphosphate (PRPP) to UMP and diphosphate. The chain is Uracil phosphoribosyltransferase from Shewanella woodyi (strain ATCC 51908 / MS32).